The chain runs to 115 residues: Hydrogenase maturation factor HypA (115 aa).

H2 is a binding site for Ni(2+). C73, C76, C89, and C92 together coordinate Zn(2+).

It belongs to the HypA/HybF family.

Functionally, involved in the maturation of [NiFe] hydrogenases. Required for nickel insertion into the metal center of the hydrogenase. The polypeptide is Hydrogenase maturation factor HypA (Shewanella halifaxensis (strain HAW-EB4)).